The sequence spans 572 residues: DNA polymerase (572 aa).

Positions 1–222 (MPRKMYSCDF…LGLDKEVRYA (222 aa)) are 3'-5' exonuclease and strand displacement activities. Residues 56 to 66 (YFHNLKFDGAF) are interaction with the primer terminal protein. Positions 142 and 166 each coordinate Mg(2+). The interval 223 to 226 (YRGG) is DNA-binding; Involved in the formation of a stable complex between TP and phi29 DNA polymerase. An initiation, polymerization and pyrophosphorolytic activities region spans residues 227–572 (FTWLNDRFKE…VLVDDTFTIK (346 aa)). Residues aspartate 246 and valine 247 each coordinate Mg(2+). Positions 251, 368, and 380 each coordinate 5-methyl-UTP. Residues aspartate 453 and aspartate 455 each contribute to the Mg(2+) site. Aspartate 455 is a binding site for 5-methyl-UTP.

Belongs to the DNA polymerase type-B family. As to quaternary structure, interacts with the primer terminal protein; this interaction allows the initiation of TP-primed DNA replication at both viral DNA ends. Interacts with DNA. The cofactor is Mg(2+).

The enzyme catalyses DNA(n) + a 2'-deoxyribonucleoside 5'-triphosphate = DNA(n+1) + diphosphate. Functionally, polymerase responsible for protein-primed viral DNA replication by strand displacement with high processivity and fidelity. To start replication, the DNA polymerase forms a heterodimer with a free primer terminal protein (TP), recognizes the replication origins at both 5' ends of the linear chromosome, and initiates replication using as primer the OH-group of Ser-232 of the TP. This polymerase possesses three enzymatic activities: DNA synthesis (polymerase), primer terminal protein (TP) deoxynucleotidylation, which is the formation of a covalent linkage (phosphoester) between the hydroxyl group of a specific serine residue in TP and 5'-dAMP, a reaction directed by the second T at the 3' end, and 3' to 5' exonuclease activity. Exonuclease activity has a proofreading purpose. In Bacillus subtilis (Bacteriophage PZA), this protein is DNA polymerase (2).